The chain runs to 224 residues: uncharacterized protein (224 aa).

A helical transmembrane segment spans residues 21 to 41; it reads LTVILIIPIVYLGVCGCFEIV.

The protein resides in the membrane. This is an uncharacterized protein from Methanocaldococcus jannaschii (strain ATCC 43067 / DSM 2661 / JAL-1 / JCM 10045 / NBRC 100440) (Methanococcus jannaschii).